The primary structure comprises 842 residues: MLFSLRNFISYSNLYLYKNVCIGGQLLLNQDEILKKMEEWPKHYNPKEIEEKWQKIWLSEEYWRDVFRFRDEDDKAPRFVIDTPPPFTSGELHMGHAYWVTIADTIGRFKRLEGYNVLLPQGWDTQGLPTELKVQYKLGIPKDNRQLFLQKCIEWTEEMIKKMKEAMIRLGYRPEWERFEYKTYEPKYRKIIQKSLIDMYKMNLIEMREGPVIWCPKCETALAQSEVGYLEKEGILAYIKFPLKEGGEIVIATTRPELLAATQAIAVNPMDERYKNLVGKIALVPIFNIEVKIISDADVEKEFGTGAVMISTYGDPQDIKWQLKYNLPIKVIVDEKGRIINTNGILDGLKIEQARNKMIELLKTKGYLVKVEKIKHNVLSHVERSDCLSPVEFLVKKQIYIKVLDKKQKLLEEYKKMKFKPARMSYYLEDWIKSIEWDWNITRQRIYGTPLPFWYCENGHLVPAKEEDLPIDPIKTSPPLEKCPLCGSELKPVTDVADVWIDSSVTVLYLTKFYEDKNVFNRTFPASLRLQGTDIIRTWLFYTFFRTLMLANNVPFTTVLVNGQVLGPDGTRMSKSKGNVVSPLDRVNDFGADAIRMALLDASIGDDFPFKWDIVKGKKMLLQKLWNASRLVYPFIAKQRLDKPKSLHIVDKWILQEHKKFVTKAINAYENYDFYLVLQELYNYFWEIVADEYLEMIKHRLFDDDNSAKYTIQRIIRDIIILLHPIAPHITEEIYSRLFGHKKSVLLEELPKVDDIEENKRIDELGEVIKKTNSLIRSEKIKNRLSMNTPVSVKLYASKQVIELINEVKDDVMKTLKVTNLELIESNEEKVEIKTANQSMGV.

A 'HIGH' region motif is present at residues Pro-86 to His-96. The 'KMSKS' region motif lies at Arg-572 to Ser-576. An ATP-binding site is contributed by Lys-575.

This sequence belongs to the class-I aminoacyl-tRNA synthetase family. ValS type 2 subfamily.

The protein resides in the cytoplasm. It catalyses the reaction tRNA(Val) + L-valine + ATP = L-valyl-tRNA(Val) + AMP + diphosphate. Functionally, catalyzes the attachment of valine to tRNA(Val). As ValRS can inadvertently accommodate and process structurally similar amino acids such as threonine, to avoid such errors, it has a 'posttransfer' editing activity that hydrolyzes mischarged Thr-tRNA(Val) in a tRNA-dependent manner. The polypeptide is Valine--tRNA ligase (Saccharolobus solfataricus (strain ATCC 35092 / DSM 1617 / JCM 11322 / P2) (Sulfolobus solfataricus)).